A 368-amino-acid polypeptide reads, in one-letter code: Protein trichome birefringence-like 43 (368 aa).

Residues 9-25 (GVVSVMVLMILVLLKQI) form a helical; Signal-anchor for type II membrane protein membrane-spanning segment. A GDS motif motif is present at residues 117-119 (GDS). Positions 344-358 (DCSHWCLSGVPDSWN) match the DCXHWCLPGXXDXWN motif motif.

The protein belongs to the PC-esterase family. TBL subfamily.

It localises to the membrane. Functionally, may act as a bridging protein that binds pectin and other cell wall polysaccharides. Probably involved in maintaining esterification of pectins. May be involved in the specific O-acetylation of cell wall polymers. The sequence is that of Protein trichome birefringence-like 43 (TBL43) from Arabidopsis thaliana (Mouse-ear cress).